Consider the following 353-residue polypeptide: Putative protein SPATA31J1 (353 aa).

The helical transmembrane segment at 34-54 (IPQIIHFVLFVVFSLVILIIL) threads the bilayer. The disordered stretch occupies residues 122-271 (EGSSHHLPRQ…NPGWVSWSDS (150 aa)). The span at 182-195 (SVESLGSPSSLSSS) shows a compositional bias: low complexity. Residues 211 to 221 (PPASTLSPNPT) show a composition bias toward polar residues. Positions 222-237 (SSTESLGYLSSLSSSQ) are enriched in low complexity. Residues 244–262 (PLKHPSHKPRGRSLPRRRN) are compositionally biased toward basic residues.

Belongs to the SPATA31 family.

Its subcellular location is the membrane. This is Putative protein SPATA31J1 from Homo sapiens (Human).